The chain runs to 311 residues: Protoheme IX farnesyltransferase (311 aa).

9 helical membrane passes run Val-32 to Asp-52, Pro-53 to Leu-73, Ile-98 to Met-118, Val-120 to Ile-140, Ile-153 to Gly-173, Phe-180 to Phe-200, Ile-226 to Ala-246, Ile-248 to Leu-268, and Phe-285 to Ile-305.

This sequence belongs to the UbiA prenyltransferase family. Protoheme IX farnesyltransferase subfamily.

The protein resides in the cell inner membrane. It carries out the reaction heme b + (2E,6E)-farnesyl diphosphate + H2O = Fe(II)-heme o + diphosphate. The protein operates within porphyrin-containing compound metabolism; heme O biosynthesis; heme O from protoheme: step 1/1. Functionally, converts heme B (protoheme IX) to heme O by substitution of the vinyl group on carbon 2 of heme B porphyrin ring with a hydroxyethyl farnesyl side group. This Bartonella bacilliformis (strain ATCC 35685 / KC583 / Herrer 020/F12,63) protein is Protoheme IX farnesyltransferase.